The chain runs to 370 residues: MKVTILASAILALINGALALPANTPTLDVTLTQVDNTRIKATVKNTGNEKVTFVHLNFFQDAAPVKKVSLFRNATEVEFTGIKRRLLTEGLSDDALTTLAPGATFEDEFDVASTADLTEGGTVTIRTDGFVPITTDRKVSGYIPYQSNELEIEVDAAKAAAVPQAIKLLDRRTKVASCSGSRASALSTALRNAASLANAAASAASSGSSTRFQEYFKTTSSSTRNTVAARFRAVASEASSQSSGKTTYYCTDPYGYCDSNTLAYTLPSSNLIANCDIYYSYLPALTSSCHAQDQATTTLHEFTHAPAVYSPGTDDYAYGYRASTALSASQALLNADTYALFANGTPPPPPSPLHIHFQMLDTNNGYSREP.

Residues 1–19 (MKVTILASAILALINGALA) form the signal peptide. The propeptide occupies 20 to 172 (LPANTPTLDV…PQAIKLLDRR (153 aa)). Intrachain disulfides connect Cys178–Cys250 and Cys257–Cys275. His300 lines the Zn(2+) pocket. Residue Glu301 is part of the active site. Positions 304 and 315 each coordinate Zn(2+).

The protein belongs to the peptidase M35 family. The cofactor is Zn(2+).

The protein resides in the secreted. The catalysed reaction is Preferential cleavage of bonds with hydrophobic residues in P1'. Also 3-Asn-|-Gln-4 and 8-Gly-|-Ser-9 bonds in insulin B chain.. Functionally, secreted metalloproteinase that allows assimilation of proteinaceous substrates. Shows high activities on basic nuclear substrates such as histone and protamine. May be involved in virulence. This chain is Neutral protease 2 homolog AFUA_4G13750, found in Aspergillus fumigatus (strain ATCC MYA-4609 / CBS 101355 / FGSC A1100 / Af293) (Neosartorya fumigata).